A 609-amino-acid polypeptide reads, in one-letter code: DNA polymerase alpha subunit B (609 aa).

Ser155 bears the Phosphoserine mark. Phosphothreonine is present on Thr164. 2 positions are modified to phosphoserine: Ser166 and Ser168.

It belongs to the DNA polymerase alpha subunit B family. As to quaternary structure, component of the alpha DNA polymerase complex (also known as the alpha DNA polymerase-primase complex) consisting of four subunits: the catalytic subunit PolA1, the regulatory subunit PolA2, and the primase complex subunits Prim1 and Prim2 respectively. PolA1 associates with the DNA primase complex before association with PolA2. Post-translationally, phosphorylated in embryos until cycle 13. Expressed in embryos (at protein level).

It localises to the nucleus. In terms of biological role, accessory subunit of the DNA polymerase alpha complex (also known as the alpha DNA polymerase-primase complex) which plays an essential role in the initiation of DNA synthesis. During the S phase of the cell cycle, the DNA polymerase alpha complex (composed of a catalytic subunit PolA1, an accessory subunit PolA2 and two primase subunits, the catalytic subunit Prim1 and the regulatory subunit Prim2) is recruited to DNA at the replicative forks. The primase subunit of the polymerase alpha complex initiates DNA synthesis by oligomerising short RNA primers on both leading and lagging strands. These primers are initially extended by the polymerase alpha catalytic subunit and subsequently transferred to polymerase delta and polymerase epsilon for processive synthesis on the lagging and leading strand, respectively. The protein is DNA polymerase alpha subunit B of Drosophila melanogaster (Fruit fly).